We begin with the raw amino-acid sequence, 106 residues long: Cell cycle protein GpsB (106 aa).

Positions 34 to 67 form a coiled coil; it reads LDVIIQDYDNFKQEIDRLKAENEKLKKSTPAVEQ. A disordered region spans residues 55–83; that stretch reads NEKLKKSTPAVEQSRSRSQQPPTSQVNYD. A compositionally biased stretch (low complexity) spans 70 to 79; sequence SRSQQPPTSQ.

The protein belongs to the GpsB family. In terms of assembly, forms polymers through the coiled coil domains. Interacts with PBP1, MreC and EzrA.

The protein resides in the cytoplasm. Divisome component that associates with the complex late in its assembly, after the Z-ring is formed, and is dependent on DivIC and PBP2B for its recruitment to the divisome. Together with EzrA, is a key component of the system that regulates PBP1 localization during cell cycle progression. Its main role could be the removal of PBP1 from the cell pole after pole maturation is completed. Also contributes to the recruitment of PBP1 to the division complex. Not essential for septum formation. The polypeptide is Cell cycle protein GpsB (Oceanobacillus iheyensis (strain DSM 14371 / CIP 107618 / JCM 11309 / KCTC 3954 / HTE831)).